The following is a 303-amino-acid chain: Proteasome subunit beta (303 aa).

A propeptide spans 1 to 64 (MTWPDRDTSA…VTPSDAVPHG (64 aa)) (removed in mature form; by autocatalysis). T65 (nucleophile) is an active-site residue.

The protein belongs to the peptidase T1B family. As to quaternary structure, the 20S proteasome core is composed of 14 alpha and 14 beta subunits that assemble into four stacked heptameric rings, resulting in a barrel-shaped structure. The two inner rings, each composed of seven catalytic beta subunits, are sandwiched by two outer rings, each composed of seven alpha subunits. The catalytic chamber with the active sites is on the inside of the barrel. Has a gated structure, the ends of the cylinder being occluded by the N-termini of the alpha-subunits. Is capped by the proteasome-associated ATPase, ARC.

It is found in the cytoplasm. The catalysed reaction is Cleavage of peptide bonds with very broad specificity.. It participates in protein degradation; proteasomal Pup-dependent pathway. Its activity is regulated as follows. The formation of the proteasomal ATPase ARC-20S proteasome complex, likely via the docking of the C-termini of ARC into the intersubunit pockets in the alpha-rings, may trigger opening of the gate for substrate entry. Interconversion between the open-gate and close-gate conformations leads to a dynamic regulation of the 20S proteasome proteolysis activity. Its function is as follows. Component of the proteasome core, a large protease complex with broad specificity involved in protein degradation. This Mycolicibacterium gilvum (strain PYR-GCK) (Mycobacterium gilvum (strain PYR-GCK)) protein is Proteasome subunit beta.